The sequence spans 480 residues: Cysteine--tRNA ligase (480 aa).

Residue C29 coordinates Zn(2+). Residues 31-41 (PTVYSDPHLGH) carry the 'HIGH' region motif. Zn(2+) contacts are provided by C220, H245, and E249. The 'KMSKS' region motif lies at 276–280 (KMAKS). Residue K279 coordinates ATP.

This sequence belongs to the class-I aminoacyl-tRNA synthetase family. As to quaternary structure, monomer. Requires Zn(2+) as cofactor.

It localises to the cytoplasm. The catalysed reaction is tRNA(Cys) + L-cysteine + ATP = L-cysteinyl-tRNA(Cys) + AMP + diphosphate. In Thermus thermophilus (strain ATCC BAA-163 / DSM 7039 / HB27), this protein is Cysteine--tRNA ligase.